The chain runs to 669 residues: Translation factor GUF1, mitochondrial (669 aa).

The N-terminal 49 residues, 1-49 (MWTLVGRGWGCARALAPRATGAALLVAPGPRSAPTLGAAPESWATDRLY), are a transit peptide targeting the mitochondrion. In terms of domain architecture, tr-type G spans 66 to 247 (ENIRNFSIVA…AIIERIPPPK (182 aa)). GTP-binding positions include 75-82 (AHVDHGKS), 140-144 (DTPGH), and 194-197 (NKID).

This sequence belongs to the TRAFAC class translation factor GTPase superfamily. Classic translation factor GTPase family. LepA subfamily.

The protein localises to the mitochondrion inner membrane. It carries out the reaction GTP + H2O = GDP + phosphate + H(+). Functionally, promotes mitochondrial protein synthesis. May act as a fidelity factor of the translation reaction, by catalyzing a one-codon backward translocation of tRNAs on improperly translocated ribosomes. Binds to mitochondrial ribosomes in a GTP-dependent manner. The sequence is that of Translation factor GUF1, mitochondrial from Homo sapiens (Human).